Here is a 249-residue protein sequence, read N- to C-terminus: NAD(P)H-quinone oxidoreductase subunit K 2 (249 aa).

4 residues coordinate [4Fe-4S] cluster: Cys-54, Cys-55, Cys-119, and Cys-150.

It belongs to the complex I 20 kDa subunit family. In terms of assembly, NDH-1 can be composed of about 15 different subunits; different subcomplexes with different compositions have been identified which probably have different functions. Requires [4Fe-4S] cluster as cofactor.

Its subcellular location is the cell inner membrane. The enzyme catalyses a plastoquinone + NADH + (n+1) H(+)(in) = a plastoquinol + NAD(+) + n H(+)(out). It carries out the reaction a plastoquinone + NADPH + (n+1) H(+)(in) = a plastoquinol + NADP(+) + n H(+)(out). In terms of biological role, NDH-1 shuttles electrons from an unknown electron donor, via FMN and iron-sulfur (Fe-S) centers, to quinones in the respiratory and/or the photosynthetic chain. The immediate electron acceptor for the enzyme in this species is believed to be plastoquinone. Couples the redox reaction to proton translocation, and thus conserves the redox energy in a proton gradient. Cyanobacterial NDH-1 also plays a role in inorganic carbon-concentration. The chain is NAD(P)H-quinone oxidoreductase subunit K 2 from Gloeobacter violaceus (strain ATCC 29082 / PCC 7421).